Here is an 855-residue protein sequence, read N- to C-terminus: Protein translocase subunit SecA (855 aa).

ATP-binding positions include Gln-85, 103 to 107 (GEGKT), and Asp-492. The segment at 794-845 (AAIHEESSSAAAPGPGQNQPGGPGGPSAGPVAPVRNLDKHGRNELCPCGSGK) is disordered. Low complexity predominate over residues 801-811 (SSAAAPGPGQN). The Zn(2+) site is built by Cys-839, Cys-841, Cys-850, and Cys-851.

This sequence belongs to the SecA family. In terms of assembly, monomer and homodimer. Part of the essential Sec protein translocation apparatus which comprises SecA, SecYEG and auxiliary proteins SecDF. Other proteins may also be involved. Zn(2+) serves as cofactor.

The protein localises to the cell membrane. Its subcellular location is the cytoplasm. It carries out the reaction ATP + H2O + cellular proteinSide 1 = ADP + phosphate + cellular proteinSide 2.. Functionally, part of the Sec protein translocase complex. Interacts with the SecYEG preprotein conducting channel. Has a central role in coupling the hydrolysis of ATP to the transfer of proteins into and across the cell membrane, serving as an ATP-driven molecular motor driving the stepwise translocation of polypeptide chains across the membrane. The polypeptide is Protein translocase subunit SecA (Clostridium beijerinckii (strain ATCC 51743 / NCIMB 8052) (Clostridium acetobutylicum)).